The primary structure comprises 493 residues: Ribosomal protein uS12 methylthiotransferase RimO (493 aa).

One can recognise an MTTase N-terminal domain in the interval 5-121 (RTVALVTLGC…ISDRLQTILN (117 aa)). The [4Fe-4S] cluster site is built by C14, C50, C84, C198, C202, and C205. A Radical SAM core domain is found at 184 to 415 (LGTSPVASVK…QLAEELTSQR (232 aa)). In terms of domain architecture, TRAM spans 417 to 487 (EERVGETLQV…GVDLVAEHHE (71 aa)).

It belongs to the methylthiotransferase family. RimO subfamily. Requires [4Fe-4S] cluster as cofactor.

Its subcellular location is the cytoplasm. It carries out the reaction L-aspartate(89)-[ribosomal protein uS12]-hydrogen + (sulfur carrier)-SH + AH2 + 2 S-adenosyl-L-methionine = 3-methylsulfanyl-L-aspartate(89)-[ribosomal protein uS12]-hydrogen + (sulfur carrier)-H + 5'-deoxyadenosine + L-methionine + A + S-adenosyl-L-homocysteine + 2 H(+). Catalyzes the methylthiolation of an aspartic acid residue of ribosomal protein uS12. The sequence is that of Ribosomal protein uS12 methylthiotransferase RimO from Streptomyces griseus subsp. griseus (strain JCM 4626 / CBS 651.72 / NBRC 13350 / KCC S-0626 / ISP 5235).